The chain runs to 144 residues: MNTTEEQQQIAHFLSKQHVLTLCAGNGMDMWCANCFYVFDAGQMALWLMTETHTRHGELMLQNSRVVGTIAPKPKTIALIRGVQYRAEAVMLSGDEERLARARYCKRFPIAKVMKAPVWQLSLQEVKMTDNTLGFGTKLHWTRT.

Belongs to the UPF0306 family.

This Serratia proteamaculans (strain 568) protein is UPF0306 protein Spro_0510.